The primary structure comprises 143 residues: Insulin-like growth factor 1 (143 aa).

An N-terminal signal peptide occupies residues 1–32 (MITPTVKMRILSSSHLFYLALCLLTFTSSATA). The b stretch occupies residues 33-61 (GPETLCGAELVDALQFVCGDRGFYFNKPT). Disulfide bonds link Cys38-Cys80, Cys50-Cys93, and Cys79-Cys84. Positions 62-73 (GYGSSSRRAPQT) are c. Residues 74–94 (GIVDECCFRSCDLRRLEMYCA) are a. The tract at residues 95–102 (PLKPAKAA) is d. The tract at residues 99 to 143 (AKAARSVRAQRHTDMPKTQKYQPPSTNKKMKSQRRRKGSTFEEHK) is disordered. The propeptide at 103–143 (RSVRAQRHTDMPKTQKYQPPSTNKKMKSQRRRKGSTFEEHK) is e peptide. The segment covering 126 to 136 (KKMKSQRRRKG) has biased composition (basic residues).

The protein belongs to the insulin family. In terms of assembly, forms a ternary complex with IGFR1 and ITGAV:ITGB3. Forms a ternary complex with IGFR1 and ITGA6:ITGB4. Forms a ternary complex with IGFBP3 and ALS.

The protein resides in the secreted. Its function is as follows. The insulin-like growth factors, isolated from plasma, are structurally and functionally related to insulin but have a much higher growth-promoting activity. May be a physiological regulator of [1-14C]-2-deoxy-D-glucose (2DG) transport and glycogen synthesis in osteoblasts. Stimulates glucose transport in bone-derived osteoblastic (PyMS) cells and is effective at much lower concentrations than insulin, not only regarding glycogen and DNA synthesis but also with regard to enhancing glucose uptake. May play a role in synapse maturation. Ca(2+)-dependent exocytosis of IGF1 is required for sensory perception of smell in the olfactory bulb. Acts as a ligand for IGF1R. Binds to the alpha subunit of IGF1R, leading to the activation of the intrinsic tyrosine kinase activity which autophosphorylates tyrosine residues in the beta subunit thus initiating a cascade of down-stream signaling events leading to activation of the PI3K-AKT/PKB and the Ras-MAPK pathways. Binds to integrins ITGAV:ITGB3 and ITGA6:ITGB4. Its binding to integrins and subsequent ternary complex formation with integrins and IGFR1 are essential for IGF1 signaling. Induces the phosphorylation and activation of IGFR1, MAPK3/ERK1, MAPK1/ERK2 and AKT1. As part of the MAPK/ERK signaling pathway, acts as a negative regulator of apoptosis in cardiomyocytes via promotion of STUB1/CHIP-mediated ubiquitination and degradation of ICER-type isoforms of CREM. The sequence is that of Insulin-like growth factor 1 from Oryctolagus cuniculus (Rabbit).